A 538-amino-acid chain; its full sequence is Capsular polysaccharide biosynthesis protein RkpI (538 aa).

6 helical membrane-spanning segments follow: residues L16–F36, V70–A90, L114–A134, I139–F159, L170–G190, and N212–V232.

It is found in the cell membrane. The protein operates within capsule biogenesis; capsule polysaccharide biosynthesis. Its function is as follows. Involved in antigen K (capsular polysaccharide) biosynthesis. In Rhizobium meliloti (strain 1021) (Ensifer meliloti), this protein is Capsular polysaccharide biosynthesis protein RkpI (rkpI).